The chain runs to 345 residues: Hemin transport protein HmuS (345 aa).

It to Y.enterocolitica HemS.

Functionally, part of the binding-protein-dependent transport system for hemin. The chain is Hemin transport protein HmuS (hmuS) from Yersinia pestis.